Consider the following 638-residue polypeptide: 1-deoxy-D-xylulose-5-phosphate synthase (638 aa).

Thiamine diphosphate contacts are provided by residues histidine 79 and alanine 120–serine 122. Residue aspartate 151 coordinates Mg(2+). Thiamine diphosphate-binding positions include glycine 152 to alanine 153, asparagine 180, tyrosine 289, and glutamate 371. Asparagine 180 is a Mg(2+) binding site.

It belongs to the transketolase family. DXPS subfamily. In terms of assembly, homodimer. Mg(2+) is required as a cofactor. Thiamine diphosphate serves as cofactor.

The catalysed reaction is D-glyceraldehyde 3-phosphate + pyruvate + H(+) = 1-deoxy-D-xylulose 5-phosphate + CO2. It participates in metabolic intermediate biosynthesis; 1-deoxy-D-xylulose 5-phosphate biosynthesis; 1-deoxy-D-xylulose 5-phosphate from D-glyceraldehyde 3-phosphate and pyruvate: step 1/1. In terms of biological role, catalyzes the acyloin condensation reaction between C atoms 2 and 3 of pyruvate and glyceraldehyde 3-phosphate to yield 1-deoxy-D-xylulose-5-phosphate (DXP). This is 1-deoxy-D-xylulose-5-phosphate synthase from Rhizobium leguminosarum bv. trifolii (strain WSM2304).